The chain runs to 361 residues: Tyrosine--tRNA ligase (361 aa).

Tyr36, Tyr162, Gln166, Asp169, and Gln184 together coordinate L-tyrosine. Positions 236–240 (KMSKS) match the 'KMSKS' region motif. Lys239 lines the ATP pocket.

Belongs to the class-I aminoacyl-tRNA synthetase family. TyrS type 4 subfamily. As to quaternary structure, homodimer.

The protein resides in the cytoplasm. It carries out the reaction tRNA(Tyr) + L-tyrosine + ATP = L-tyrosyl-tRNA(Tyr) + AMP + diphosphate + H(+). Functionally, catalyzes the attachment of tyrosine to tRNA(Tyr) in a two-step reaction: tyrosine is first activated by ATP to form Tyr-AMP and then transferred to the acceptor end of tRNA(Tyr). The sequence is that of Tyrosine--tRNA ligase from Saccharolobus islandicus (strain L.S.2.15 / Lassen #1) (Sulfolobus islandicus).